The sequence spans 2699 residues: UPF0648 protein C3H5.09c (2699 aa).

N21 carries an N-linked (GlcNAc...) asparagine glycan. The chain crosses the membrane as a helical span at residues 24-44 (FVWVVIATGFLFHLVLFVLSY). N-linked (GlcNAc...) asparagine glycosylation is found at N288, N293, N334, N345, N433, N507, N551, N655, N760, N993, N1000, N1003, N1006, and N1009. Residues 975–1021 (KAKDPSPKSASESSSFYQNGSDIDDNDSNSSNTSNHTTENANAQQRK) are disordered. Positions 981 to 995 (PKSASESSSFYQNGS) are enriched in low complexity. Positions 1006–1033 (NTSNHTTENANAQQRKLEDLNRSFEDFL) form a coiled coil. The segment covering 1010–1019 (HTTENANAQQ) has biased composition (polar residues). Residues N1026, N1039, N1046, N1236, N1255, N1344, N1527, N1595, N1791, N1916, N2032, N2048, N2256, N2285, N2388, N2407, N2417, N2508, and N2622 are each glycosylated (N-linked (GlcNAc...) asparagine). Residues 1758 to 1818 (QYELLQKRRK…TLSDHYRLLE (61 aa)) adopt a coiled-coil conformation. A disordered region spans residues 2393 to 2447 (FPHIYSRNHDKRKENGSQGEADNSNYSGSLMRRRTNDQEEDALATPSSSRRDSRS). Polar residues predominate over residues 2408–2420 (GSQGEADNSNYSG). 2 disordered regions span residues 2606–2632 (AEEN…LNSP) and 2647–2676 (ADIV…ARVD). Polar residues predominate over residues 2617 to 2632 (SAISRNHSTRSSLNSP).

It belongs to the UPF0648 family.

The protein localises to the membrane. The chain is UPF0648 protein C3H5.09c from Schizosaccharomyces pombe (strain 972 / ATCC 24843) (Fission yeast).